The primary structure comprises 164 residues: Putative pre-16S rRNA nuclease (164 aa).

Belongs to the YqgF nuclease family.

The protein localises to the cytoplasm. Functionally, could be a nuclease involved in processing of the 5'-end of pre-16S rRNA. This is Putative pre-16S rRNA nuclease from Rhizobium etli (strain CIAT 652).